We begin with the raw amino-acid sequence, 462 residues long: MQKQQTLKDKFCLQGKGLHTGLDIHITFCPAPEESGYKIKRVDLEGQPVIDAIADNVHSTRRGTVLKKGEVSVSTIEHAMAALYALGVDNCLIEVDAPEFPILDGSAEPYVSEIKRVGLVEQETPRDYYIIKKRMEVSDPESNSKLILLPDDEFTVDVHIAFPSKVLSNQFASLETLSDFEEQIAGARTFVFVREVQMLLEANLIKGGDLDNALVIYDEPLAQDRLDALSDMMGVERKQVNELGYINNKPLIYDNEPARHKLLDVLGDLALIGKYIRGRIIATCPGHSINNKMARLIRKEIKQNEAQAPVYNPNKEPIMDINRIKELLPHRYPFLLVDKIIEVGPDYIVGVKSVSGNEPFFPGHFPGEPVMPGVLQVEAMAQVGGLLVLNTLTEPSSYSTYFLMIDKVKFRRKVVPGDTLVFKLRMISEIRRGVANMRGLAFVGEQLACEAEFMAQIIQNKE.

The tract at residues 1–302 (MQKQQTLKDK…MARLIRKEIK (302 aa)) is UDP-3-O-acyl-N-acetylglucosamine deacetylase. Zn(2+) is bound by residues H78, H260, and D264. H287 serves as the catalytic Proton donor. The segment at 303–462 (QNEAQAPVYN…FMAQIIQNKE (160 aa)) is 3-hydroxyacyl-[acyl-carrier-protein] dehydratase. The active site involves H364.

This sequence in the N-terminal section; belongs to the LpxC family. In the C-terminal section; belongs to the thioester dehydratase family. Zn(2+) serves as cofactor.

Its subcellular location is the cytoplasm. It carries out the reaction a UDP-3-O-[(3R)-3-hydroxyacyl]-N-acetyl-alpha-D-glucosamine + H2O = a UDP-3-O-[(3R)-3-hydroxyacyl]-alpha-D-glucosamine + acetate. It catalyses the reaction a (3R)-hydroxyacyl-[ACP] = a (2E)-enoyl-[ACP] + H2O. It participates in glycolipid biosynthesis; lipid IV(A) biosynthesis; lipid IV(A) from (3R)-3-hydroxytetradecanoyl-[acyl-carrier-protein] and UDP-N-acetyl-alpha-D-glucosamine: step 2/6. In terms of biological role, catalyzes the hydrolysis of UDP-3-O-myristoyl-N-acetylglucosamine to form UDP-3-O-myristoylglucosamine and acetate, the committed step in lipid A biosynthesis. Its function is as follows. Involved in unsaturated fatty acids biosynthesis. Catalyzes the dehydration of short chain beta-hydroxyacyl-ACPs and long chain saturated and unsaturated beta-hydroxyacyl-ACPs. This Porphyromonas gingivalis (strain ATCC BAA-308 / W83) protein is Bifunctional enzyme LpxC/FabZ (lpxC/fabZ).